An 859-amino-acid chain; its full sequence is Cadherin-related family member 1 (859 aa).

Positions 1–19 (MRRCRWAALALGLLRLCLA) are cleaved as a signal peptide. Over 20-700 (QANFAPHFFD…LIQTKDNPMK (681 aa)) the chain is Extracellular. Cadherin domains follow at residues 36 to 135 (NGNM…APRF), 136 to 246 (IQEP…APVF), 247 to 353 (VGTP…PPTF), 359 to 472 (PQNR…VPKF), 473 to 576 (DSLY…PPQF), and 573 to 688 (PPQF…SPMA). Asparagine 58 and asparagine 89 each carry an N-linked (GlcNAc...) asparagine glycan. Asparagine 296 carries an N-linked (GlcNAc...) asparagine glycan. Residues 701–721 (AVGVLAGTMATVVAITVLIST) form a helical membrane-spanning segment. Residues 722-859 (ATFWRNKKSN…KKSVHNKAYF (138 aa)) lie on the Cytoplasmic side of the membrane. The disordered stretch occupies residues 770–838 (KEKPPNENCN…PKTMGSPVQS (69 aa)). Positions 775 to 791 (NENCNNNSPESSLLPRA) are enriched in low complexity.

Interacts with PROM1. In terms of processing, undergoes proteolytic cleavage; produces a soluble 95 kDa N-terminal fragment and a 25 kDa cell-associated C-terminal fragment.

It is found in the cell membrane. Functionally, potential calcium-dependent cell-adhesion protein. May be required for the structural integrity of the outer segment (OS) of photoreceptor cells. The protein is Cadherin-related family member 1 of Homo sapiens (Human).